The primary structure comprises 227 residues: Isoprenyl transferase (227 aa).

The active site involves Asp-13. Asp-13 contacts Mg(2+). Residues 14-17 (GNGR), Trp-18, Arg-26, His-30, and 58-60 (STE) each bind substrate. The active-site Proton acceptor is Asn-61. Substrate contacts are provided by residues Trp-62, Arg-64, Arg-175, and 181–183 (RLS). Glu-194 serves as a coordination point for Mg(2+).

Belongs to the UPP synthase family. In terms of assembly, homodimer. Requires Mg(2+) as cofactor.

Catalyzes the condensation of isopentenyl diphosphate (IPP) with allylic pyrophosphates generating different type of terpenoids. This chain is Isoprenyl transferase, found in Treponema denticola (strain ATCC 35405 / DSM 14222 / CIP 103919 / JCM 8153 / KCTC 15104).